The following is a 274-amino-acid chain: Ethanolamine ammonia-lyase small subunit (274 aa).

Residues Val-161, Glu-182, and Cys-211 each contribute to the adenosylcob(III)alamin site.

This sequence belongs to the EutC family. As to quaternary structure, the basic unit is a heterodimer which dimerizes to form tetramers. The heterotetramers trimerize; 6 large subunits form a core ring with 6 small subunits projecting outwards. It depends on adenosylcob(III)alamin as a cofactor.

It localises to the bacterial microcompartment. The catalysed reaction is ethanolamine = acetaldehyde + NH4(+). It functions in the pathway amine and polyamine degradation; ethanolamine degradation. In terms of biological role, catalyzes the deamination of various vicinal amino-alcohols to oxo compounds. Allows this organism to utilize ethanolamine as the sole source of nitrogen and carbon in the presence of external vitamin B12. The polypeptide is Ethanolamine ammonia-lyase small subunit (Pseudomonas fluorescens (strain ATCC BAA-477 / NRRL B-23932 / Pf-5)).